Reading from the N-terminus, the 190-residue chain is Protein LZIC (190 aa).

Positions 2–63 (ASRGKTETSK…SEFNDSLKKI (62 aa)) form a coiled coil.

The protein belongs to the CTNNBIP1 family. As to quaternary structure, does not interact with CTNNB1. As to expression, ubiquitously expressed, with highest levels in kidney. Up-regulated in several cases of gastric cancers.

This is Protein LZIC (LZIC) from Homo sapiens (Human).